We begin with the raw amino-acid sequence, 162 residues long: Translocator protein 2 (162 aa).

5 helical membrane-spanning segments follow: residues 3–23 (LQGP…CMLI), 44–64 (VILL…YLVW), 79–99 (LGLY…FLAA), 103–123 (GLAL…VFIW), and 129–149 (LAAL…AITY).

Belongs to the TspO/BZRP family. In terms of assembly, homotetramer. May also form homodimer. Expressed in liver, bone marrow and spleen. In spleen, detected in red pulp but not in white pulp.

Its subcellular location is the endoplasmic reticulum membrane. It localises to the cell membrane. Cholesterol-binding protein involved in the redistribution of cholesterol from lipid droplets to the endoplasmic reticulum. Required to meet cholesterol demands during erythropoietic differentiation. May play a role in transport processes at the plasma membrane of erythrocytes, including regulating VDAC-mediated ATP export, and import of the heme precursors protoporphyrin IX and 5-aminolevulinic acid. In Mus musculus (Mouse), this protein is Translocator protein 2 (Tspo2).